A 303-amino-acid chain; its full sequence is Ribosomal RNA small subunit methyltransferase H (303 aa).

S-adenosyl-L-methionine contacts are provided by residues 32 to 34, Asp-52, Phe-78, Asp-99, and Gln-106; that span reads GGH.

Belongs to the methyltransferase superfamily. RsmH family.

Its subcellular location is the cytoplasm. It carries out the reaction cytidine(1402) in 16S rRNA + S-adenosyl-L-methionine = N(4)-methylcytidine(1402) in 16S rRNA + S-adenosyl-L-homocysteine + H(+). In terms of biological role, specifically methylates the N4 position of cytidine in position 1402 (C1402) of 16S rRNA. This Acinetobacter baylyi (strain ATCC 33305 / BD413 / ADP1) protein is Ribosomal RNA small subunit methyltransferase H.